The following is a 345-amino-acid chain: Methylthioribose-1-phosphate isomerase 2 (345 aa).

Substrate-binding positions include 47-49 (RGA), arginine 88, and glutamine 194. The active-site Proton donor is aspartate 235. 245-246 (NK) contributes to the substrate binding site.

Belongs to the eIF-2B alpha/beta/delta subunits family. MtnA subfamily.

It catalyses the reaction 5-(methylsulfanyl)-alpha-D-ribose 1-phosphate = 5-(methylsulfanyl)-D-ribulose 1-phosphate. The protein operates within amino-acid biosynthesis; L-methionine biosynthesis via salvage pathway; L-methionine from S-methyl-5-thio-alpha-D-ribose 1-phosphate: step 1/6. Functionally, catalyzes the interconversion of methylthioribose-1-phosphate (MTR-1-P) into methylthioribulose-1-phosphate (MTRu-1-P). This Pseudothermotoga lettingae (strain ATCC BAA-301 / DSM 14385 / NBRC 107922 / TMO) (Thermotoga lettingae) protein is Methylthioribose-1-phosphate isomerase 2.